Consider the following 109-residue polypeptide: Flagellar hook-basal body complex protein FliE (109 aa).

Residues 1-38 form a disordered region; sequence MQAIHNDKSLLSPFSELNTDNRTKREESGNAFKEQKGG. A compositionally biased stretch (basic and acidic residues) spans 19-38; it reads TDNRTKREESGNAFKEQKGG.

It belongs to the FliE family.

It localises to the bacterial flagellum basal body. The polypeptide is Flagellar hook-basal body complex protein FliE (Helicobacter pylori (strain G27)).